We begin with the raw amino-acid sequence, 436 residues long: GTPase Der (436 aa).

EngA-type G domains follow at residues 4–167 (PTVA…PVEE) and 175–351 (IRFS…ESQN). GTP-binding positions include 10 to 17 (GRPNVGKS), 57 to 61 (DTGGI), 119 to 122 (NKVD), 181 to 188 (GRPNVGKS), 229 to 233 (DTAGM), and 294 to 297 (NKWD). A KH-like domain is found at 352–436 (KRIPSAVLND…PIHLIARKRK (85 aa)).

It belongs to the TRAFAC class TrmE-Era-EngA-EngB-Septin-like GTPase superfamily. EngA (Der) GTPase family. In terms of assembly, associates with the 50S ribosomal subunit.

Functionally, GTPase that plays an essential role in the late steps of ribosome biogenesis. The polypeptide is GTPase Der (Streptococcus pyogenes serotype M5 (strain Manfredo)).